Reading from the N-terminus, the 724-residue chain is Catalase-peroxidase (724 aa).

The tract at residues 1–26 is disordered; sequence MDENKTKPTGKCPVMHGGNTSTGSSN. A cross-link (tryptophyl-tyrosyl-methioninium (Trp-Tyr) (with M-251)) is located at residues 98–225; the sequence is WHSAGSYRTT…LAAVQMGLIY (128 aa). H99 functions as the Proton acceptor in the catalytic mechanism. The tryptophyl-tyrosyl-methioninium (Tyr-Met) (with W-98) cross-link spans 225–251; sequence YVNPEGVDGKSDPLRTAQDMRVTFSRM. Residue H266 participates in heme b binding.

Belongs to the peroxidase family. Peroxidase/catalase subfamily. As to quaternary structure, homodimer or homotetramer. It depends on heme b as a cofactor. In terms of processing, formation of the three residue Trp-Tyr-Met cross-link is important for the catalase, but not the peroxidase activity of the enzyme.

The enzyme catalyses H2O2 + AH2 = A + 2 H2O. The catalysed reaction is 2 H2O2 = O2 + 2 H2O. Functionally, bifunctional enzyme with both catalase and broad-spectrum peroxidase activity. This is Catalase-peroxidase from Pectobacterium atrosepticum (strain SCRI 1043 / ATCC BAA-672) (Erwinia carotovora subsp. atroseptica).